The sequence spans 32 residues: Protamine S4 (32 aa).

The interval 1–32 (GCKKRKARKRPKCKKARKRPKCKRRKVAKKKC) is disordered.

As to expression, testis.

It localises to the nucleus. The protein resides in the chromosome. In terms of biological role, protamines substitute for histones in the chromatin of sperm during the haploid phase of spermatogenesis. They compact sperm DNA into a highly condensed, stable and inactive complex. The polypeptide is Protamine S4 (Scyliorhinus canicula (Small-spotted catshark)).